The chain runs to 451 residues: Serine--tRNA ligase, cytoplasmic (451 aa).

236–238 contacts L-serine; it reads TSE. Residues 267–269 and Val283 each bind ATP; that span reads RKE. Position 290 (Glu290) interacts with L-serine. Residue 354 to 357 participates in ATP binding; the sequence is ELVS. Thr392 provides a ligand contact to L-serine.

This sequence belongs to the class-II aminoacyl-tRNA synthetase family. Type-1 seryl-tRNA synthetase subfamily. Homodimer. The tRNA molecule binds across the dimer.

The protein resides in the cytoplasm. The catalysed reaction is tRNA(Ser) + L-serine + ATP = L-seryl-tRNA(Ser) + AMP + diphosphate + H(+). It carries out the reaction tRNA(Sec) + L-serine + ATP = L-seryl-tRNA(Sec) + AMP + diphosphate + H(+). It participates in aminoacyl-tRNA biosynthesis; selenocysteinyl-tRNA(Sec) biosynthesis; L-seryl-tRNA(Sec) from L-serine and tRNA(Sec): step 1/1. Functionally, catalyzes the attachment of serine to tRNA(Ser). Is also able to aminoacylate tRNA(Sec) with serine, to form the misacylated tRNA L-seryl-tRNA(Sec), which will be further converted into selenocysteinyl-tRNA(Sec). In Dictyostelium discoideum (Social amoeba), this protein is Serine--tRNA ligase, cytoplasmic (serS).